We begin with the raw amino-acid sequence, 362 residues long: D-alanine--D-alanine ligase (362 aa).

The ATP-grasp domain occupies 134–345; the sequence is KILAQRAGVP…YPDLITRLIR (212 aa). 170–225 provides a ligand contact to ATP; the sequence is GQLGTSNLFVKPSNQGSSVGITHVTDDSNYAEALAEAFKYDDKVLVEEGIVGTEVE. Asp-298, Glu-312, and Asn-314 together coordinate Mg(2+).

It belongs to the D-alanine--D-alanine ligase family. It depends on Mg(2+) as a cofactor. The cofactor is Mn(2+).

It localises to the cytoplasm. It catalyses the reaction 2 D-alanine + ATP = D-alanyl-D-alanine + ADP + phosphate + H(+). The protein operates within cell wall biogenesis; peptidoglycan biosynthesis. Cell wall formation. The chain is D-alanine--D-alanine ligase from Lactobacillus delbrueckii subsp. bulgaricus (strain ATCC BAA-365 / Lb-18).